Reading from the N-terminus, the 35-residue chain is KVPAYCKLPPDSGPCKGHFPAFYYDPVSSYCQKFI.

The BPTI/Kunitz inhibitor domain maps to 6 to 35; it reads CKLPPDSGPCKGHFPAFYYDPVSSYCQKFI.

In terms of processing, contains three disulfide bonds. Expressed by the venom gland.

It is found in the secreted. In terms of biological role, serine protease inhibitor. In Micrurus pyrrhocryptus (Coral snake), this protein is Kunitz-type serine protease inhibitor G1.